A 244-amino-acid chain; its full sequence is 1-(5-phosphoribosyl)-5-[(5-phosphoribosylamino)methylideneamino] imidazole-4-carboxamide isomerase (244 aa).

Asp-8 serves as the catalytic Proton acceptor. Catalysis depends on Asp-131, which acts as the Proton donor.

This sequence belongs to the HisA/HisF family.

It localises to the cytoplasm. The enzyme catalyses 1-(5-phospho-beta-D-ribosyl)-5-[(5-phospho-beta-D-ribosylamino)methylideneamino]imidazole-4-carboxamide = 5-[(5-phospho-1-deoxy-D-ribulos-1-ylimino)methylamino]-1-(5-phospho-beta-D-ribosyl)imidazole-4-carboxamide. Its pathway is amino-acid biosynthesis; L-histidine biosynthesis; L-histidine from 5-phospho-alpha-D-ribose 1-diphosphate: step 4/9. This is 1-(5-phosphoribosyl)-5-[(5-phosphoribosylamino)methylideneamino] imidazole-4-carboxamide isomerase from Thermomicrobium roseum (strain ATCC 27502 / DSM 5159 / P-2).